The following is a 292-amino-acid chain: Elongation factor Ts (292 aa).

Positions 82 to 85 (TDFV) are involved in Mg(2+) ion dislocation from EF-Tu.

This sequence belongs to the EF-Ts family.

The protein localises to the cytoplasm. In terms of biological role, associates with the EF-Tu.GDP complex and induces the exchange of GDP to GTP. It remains bound to the aminoacyl-tRNA.EF-Tu.GTP complex up to the GTP hydrolysis stage on the ribosome. In Legionella pneumophila (strain Paris), this protein is Elongation factor Ts.